Consider the following 289-residue polypeptide: Diaminopimelate epimerase (289 aa).

N15 and N76 together coordinate substrate. C85 acts as the Proton donor in catalysis. Substrate is bound by residues 86 to 87 (GN), N158, N191, and 209 to 210 (ER). The Proton acceptor role is filled by C218. 219–220 (GT) is a binding site for substrate.

It belongs to the diaminopimelate epimerase family. Homodimer.

The protein localises to the cytoplasm. The catalysed reaction is (2S,6S)-2,6-diaminopimelate = meso-2,6-diaminopimelate. Its pathway is amino-acid biosynthesis; L-lysine biosynthesis via DAP pathway; DL-2,6-diaminopimelate from LL-2,6-diaminopimelate: step 1/1. Functionally, catalyzes the stereoinversion of LL-2,6-diaminopimelate (L,L-DAP) to meso-diaminopimelate (meso-DAP), a precursor of L-lysine and an essential component of the bacterial peptidoglycan. The sequence is that of Diaminopimelate epimerase from Streptomyces coelicolor (strain ATCC BAA-471 / A3(2) / M145).